We begin with the raw amino-acid sequence, 1512 residues long: Lysophospholipase NTE1 (1512 aa).

The Cytoplasmic portion of the chain corresponds to 1 to 48 (MAAPDAMTSLVKSSVALLSSAHESLPTSLAAMKTAETAPSSTFGILGR). A helical transmembrane segment spans residues 49–69 (VILSILSVLPTLLFWVSYTLP). At 70 to 83 (TWLFTLFSMSLTFT) the chain is on the lumenal side. A helical membrane pass occupies residues 84-104 (MNFTTLMLVLVFVVSTISYFV). At 105 to 1512 (RYRYLTMYAR…RTMAPRRASI (1408 aa)) the chain is on the cytoplasmic side. Disordered stretches follow at residues 204-230 (NREESDSDEDDGELQGESGGGSAQAHR), 262-362 (RHDE…AHPD), 534-556 (TQMSRGTGRSGRSSFSQPYQHDV), and 740-770 (TEDDLFGPPLQPTATNTSLRNGENSKKKRSR). Over residues 208–217 (SDSDEDDGEL) the composition is skewed to acidic residues. Positions 268-291 (GPSSSTPMSPQHRPSMTRNSSFNM) are enriched in polar residues. Positions 343-358 (HSKQRRSPSRSTKPKS) are enriched in basic residues. A compositionally biased stretch (low complexity) spans 537–549 (SRGTGRSGRSSFS). A nucleoside 3',5'-cyclic phosphate is bound by residues 669 to 793 (LSAS…SNRS) and 830 to 950 (RLTT…IASR). A compositionally biased stretch (polar residues) spans 751–761 (PTATNTSLRNG). The PNPLA domain occupies 1209–1373 (LVLGGGGARG…IDNLTVAHMK (165 aa)). A GXGXXG motif is present at residues 1213–1218 (GGGARG). Positions 1240–1244 (GTSIG) match the GXSXG motif. Serine 1242 (nucleophile) is an active-site residue. Residue aspartate 1360 is the Proton acceptor of the active site. The short motif at 1360–1362 (DGG) is the DGA/G element.

It belongs to the NTE family.

The protein resides in the endoplasmic reticulum membrane. The catalysed reaction is a 1-acyl-sn-glycero-3-phosphocholine + H2O = sn-glycerol 3-phosphocholine + a fatty acid + H(+). Inhibited by organophosphorus esters. In terms of biological role, intracellular phospholipase B that catalyzes the double deacylation of phosphatidylcholine (PC) to glycerophosphocholine (GroPCho). Plays an important role in membrane lipid homeostasis. Responsible for the rapid PC turnover in response to inositol, elevated temperatures, or when choline is present in the growth medium. This chain is Lysophospholipase NTE1 (NTE1), found in Phaeosphaeria nodorum (strain SN15 / ATCC MYA-4574 / FGSC 10173) (Glume blotch fungus).